The chain runs to 353 residues: Photosystem II D2 protein (353 aa).

T2 is modified (N-acetylthreonine). T2 carries the post-translational modification Phosphothreonine. A helical membrane pass occupies residues 41–61 (CAYFALGGWFTGTTFVTSWYT). H118 lines the chlorophyll a pocket. Residues 125–141 (GFMLRQFELARSVQLRP) form a helical membrane-spanning segment. Residues Q130 and N143 each contribute to the pheophytin a site. A helical membrane pass occupies residues 153-166 (VFVSVFLIYPLGQS). H198 serves as a coordination point for chlorophyll a. The chain crosses the membrane as a helical span at residues 208–228 (AALLCAIHGATVENTLFEDGD). The a plastoquinone site is built by H215 and F262. H215 contributes to the Fe cation binding site. Fe cation is bound at residue H269. The chain crosses the membrane as a helical span at residues 279-295 (GLWMSALGVVGLALNLR).

It belongs to the reaction center PufL/M/PsbA/D family. As to quaternary structure, PSII is composed of 1 copy each of membrane proteins PsbA, PsbB, PsbC, PsbD, PsbE, PsbF, PsbH, PsbI, PsbJ, PsbK, PsbL, PsbM, PsbT, PsbX, PsbY, PsbZ, Psb30/Ycf12, at least 3 peripheral proteins of the oxygen-evolving complex and a large number of cofactors. It forms dimeric complexes. The cofactor is The D1/D2 heterodimer binds P680, chlorophylls that are the primary electron donor of PSII, and subsequent electron acceptors. It shares a non-heme iron and each subunit binds pheophytin, quinone, additional chlorophylls, carotenoids and lipids. There is also a Cl(-1) ion associated with D1 and D2, which is required for oxygen evolution. The PSII complex binds additional chlorophylls, carotenoids and specific lipids..

The protein localises to the plastid. It is found in the chloroplast thylakoid membrane. It catalyses the reaction 2 a plastoquinone + 4 hnu + 2 H2O = 2 a plastoquinol + O2. In terms of biological role, photosystem II (PSII) is a light-driven water:plastoquinone oxidoreductase that uses light energy to abstract electrons from H(2)O, generating O(2) and a proton gradient subsequently used for ATP formation. It consists of a core antenna complex that captures photons, and an electron transfer chain that converts photonic excitation into a charge separation. The D1/D2 (PsbA/PsbD) reaction center heterodimer binds P680, the primary electron donor of PSII as well as several subsequent electron acceptors. D2 is needed for assembly of a stable PSII complex. This Pelargonium hortorum (Common geranium) protein is Photosystem II D2 protein.